Reading from the N-terminus, the 362-residue chain is MKHFPSKVLTTAILATFCSGALAATSDDDVKKAATVAIVAAYNNGQEINGFKAGETIYDIGEDGTITQKDATAADVEADDFKGLGLKKVVTNLTKTVNENKQNVDAKVKAAESEIEKLTTKLADTDAALADTDAALDETTNALNKLGENITTFAEETKTNIVKIDEKLEAVADTVDKHAEAFNDIADSLDETNTKADEAVKTANEAKQTAEETKQNVDAKVKAAETAAGKAEAAAGTANTAADKAEAVAAKVTDIKADIATNKADIAKNSARIDSLDKNVANLRKETRQGLAEQAALSGLFQPYNVGRFNVTAAVGGYKSESAVAIGTGFRFTENFAAKAGVAVGTSSGSSAAYHVGVNYEW.

An N-terminal signal peptide occupies residues 1-23; sequence MKHFPSKVLTTAILATFCSGALA. The tract at residues 24–169 is head domain; that stretch reads ATSDDDVKKA…NIVKIDEKLE (146 aa). 2 coiled-coil regions span residues 90–146 and 183–288; these read VTNL…LNKL and NDIA…KETR. The tract at residues 170–307 is coiled stalk domain; the sequence is AVADTVDKHA…SGLFQPYNVG (138 aa). The next 4 beta stranded transmembrane spans lie at 307–317, 321–332, 339–345, and 351–362; these read GRFNVTAAVGG, ESAVAIGTGFRF, KAGVAVG, and SAAYHVGVNYEW. The translocator domain stretch occupies residues 308–362; that stretch reads RFNVTAAVGGYKSESAVAIGTGFRFTENFAAKAGVAVGTSSGSSAAYHVGVNYEW.

This sequence belongs to the autotransporter-2 (AT-2) (TC 1.B.40) family. As to quaternary structure, forms high molecular weight oligomers in whole cell extracts that are not disrupted by boiling in SDS buffer. Homotrimer. A fragment containing the N-terminal half of the mature protein (residues 24-210, head domain plus part of the stalk) binds human integrin beta-1 (ITGB1). It was not seen to bind immobilized purified CEACAMs 1, 3, 5, 6 or 8 nor commercially prepared type I collagen, fibronectin or matrigel.

The protein resides in the cell surface. Its subcellular location is the cell outer membrane. Functionally, adheres to and induces bacterial uptake by human epithelial cells. Upon expression in engineered Y.enterocolitica confers an 11- to 15-fold increase in bacterial adherence and uptake by human epithelial cell lines; part of the uptake is mediated by integrin beta-1 (ITGB1) suggesting it may be a human receptor for NadA. A bacterial cell surface protein; antisera against this protein induce complement-mediated killing of this and other strains. The sequence is that of Neisseria adhesin A from Neisseria meningitidis serogroup B (strain ATCC BAA-335 / MC58).